The chain runs to 129 residues: Small ribosomal subunit protein eS6 (129 aa).

Belongs to the eukaryotic ribosomal protein eS6 family.

In Methanocorpusculum labreanum (strain ATCC 43576 / DSM 4855 / Z), this protein is Small ribosomal subunit protein eS6.